Reading from the N-terminus, the 657-residue chain is MSDNGSPAVLPKTEFNKYKIGKVKSTPAIQRDAKTNLTYIKLRKRSSEKVYGCTVFQNHYREDEKLGQGTFGEVYKGIHLETQRQVAMKKIIVSVEKDLFPITAQREITILKRLNHKNIIKLIEMVYDHSPDITNAASSNLHKSFYMILPYMVADLSGVLHNPRINLEMCDIKNMMLQILEGLNYIHCAKFMHRDIKTANILIDHNGVLKLADFGLARLYYGCPPNLKYPGGAGSGAKYTSVVVTRWYRAPELVLGDKQYTTAVDIWGVGCVFAEFFEKKPILQGKTDIDQGHVIFKLLGTPTEEDWAVARYLPGAELTTTNYKPTLRERFGKYLSETGLDFLGQLLALDPYKRLTAMSAKHHPWFKEDPLPSEKITLPTEESHEADIKRYKEEMHQSLSQRVPTAPRGHIVEKGESPVVKNLGAIPRGPKKDDASFLPPSKNVLAKPPPSKIRELHQNPRPYHVNSGYAKTAIPPPAAPAGVNRYGPNNSSRNNRFSGNSTAPNNSRNPVNRFHPETNVSSKYNKVPLPLGPQSRYQGNSNESRYKNSPNDSRYHNPRYVNKPETNFNRQPQKYSRQESNAPINKNYNPSNGSRNMAGDHHQGSRPSHPQFPISPSQGQHQLTSKPIEKKNGSFKDERAKPDESKEFQNSDIADLY.

One can recognise a Protein kinase domain in the interval 60 to 366; that stretch reads YREDEKLGQG…AMSAKHHPWF (307 aa). ATP contacts are provided by residues 66 to 74 and Lys89; that span reads LGQGTFGEV. The active-site Proton acceptor is Asp195. A Phosphothreonine; by CAK modification is found at Thr240. At Ser400 the chain carries Phosphoserine. A Phosphothreonine modification is found at Thr405. The tract at residues 414–657 is disordered; that stretch reads KGESPVVKNL…FQNSDIADLY (244 aa). At Ser417 the chain carries Phosphoserine. A compositionally biased stretch (low complexity) spans 489–501; sequence NNSSRNNRFSGNS. Polar residues-rich tracts occupy residues 535–552, 564–595, and 614–625; these read SRYQ…SPND, PETN…NGSR, and ISPSQGQHQLTS. The segment covering 627-649 has biased composition (basic and acidic residues); sequence PIEKKNGSFKDERAKPDESKEFQ. Ser634 is subject to Phosphoserine.

Belongs to the protein kinase superfamily. CMGC Ser/Thr protein kinase family. CDC2/CDKX subfamily. As to quaternary structure, belongs to the BUR kinase complex composed of SGV1/BUR1 and BUR2. Interacts with BUR2 and RBP1.

Its subcellular location is the nucleus. The enzyme catalyses L-seryl-[protein] + ATP = O-phospho-L-seryl-[protein] + ADP + H(+). The catalysed reaction is L-threonyl-[protein] + ATP = O-phospho-L-threonyl-[protein] + ADP + H(+). It catalyses the reaction [DNA-directed RNA polymerase] + ATP = phospho-[DNA-directed RNA polymerase] + ADP + H(+). Its function is as follows. Serine/threonine-protein kinase component of the BUR kinase complex involved in transcription regulation. This complex phosphorylates 'Ser-120' of the UBC2/RAD6 ubiquitin-conjugating enzyme (E2), leading to monoubiquitination of histone H2B, the localization of the PAF1 complex to the chromatin, and the silencing of telomeric-associated genes. Also required for histone H3 'Lys-4' trimethylation. May phosphorylate the 'Ser-5' of the RBP1 carboxy-terminal domain (CTD) repeats. Necessary for the recovery from pheromone-induced growth arrest in the cell cycle G1 phase. The kinase activity of the complex requires the presence of BUR2. The chain is Serine/threonine-protein kinase BUR1 (SGV1) from Saccharomyces cerevisiae (strain ATCC 204508 / S288c) (Baker's yeast).